The following is a 1758-amino-acid chain: uncharacterized protein (1758 aa).

The signal sequence occupies residues 1–12 (MCFFLGSRLAYA). One can recognise an Autotransporter domain in the interval 1465–1758 (ENLYNNGMWI…SFILGGNYYF (294 aa)).

It is found in the cell outer membrane. This is an uncharacterized protein from Escherichia coli (strain K12).